The primary structure comprises 361 residues: Chorismate synthase (361 aa).

NADP(+) is bound by residues R48 and R54. FMN-binding positions include 131-133 (RSS), 243-244 (NA), G287, 302-306 (KPTSS), and R328.

Belongs to the chorismate synthase family. In terms of assembly, homotetramer. FMNH2 is required as a cofactor.

It catalyses the reaction 5-O-(1-carboxyvinyl)-3-phosphoshikimate = chorismate + phosphate. Its pathway is metabolic intermediate biosynthesis; chorismate biosynthesis; chorismate from D-erythrose 4-phosphate and phosphoenolpyruvate: step 7/7. In terms of biological role, catalyzes the anti-1,4-elimination of the C-3 phosphate and the C-6 proR hydrogen from 5-enolpyruvylshikimate-3-phosphate (EPSP) to yield chorismate, which is the branch point compound that serves as the starting substrate for the three terminal pathways of aromatic amino acid biosynthesis. This reaction introduces a second double bond into the aromatic ring system. The chain is Chorismate synthase from Rhodopseudomonas palustris (strain BisB5).